We begin with the raw amino-acid sequence, 230 residues long: Cyclin-U2-2 (230 aa).

Belongs to the cyclin family. Cyclin U/P subfamily. As to quaternary structure, interacts with CDKA-1. As to expression, expressed in roots and stems. Expressed in the shoot apex, leaf primordia and young leaves.

In Arabidopsis thaliana (Mouse-ear cress), this protein is Cyclin-U2-2 (CYCU2-2).